A 450-amino-acid chain; its full sequence is UDP-N-acetylmuramate--L-alanine ligase (450 aa).

Position 112–118 (112–118 (GTHGKTT)) interacts with ATP.

The protein belongs to the MurCDEF family.

The protein localises to the cytoplasm. It carries out the reaction UDP-N-acetyl-alpha-D-muramate + L-alanine + ATP = UDP-N-acetyl-alpha-D-muramoyl-L-alanine + ADP + phosphate + H(+). The protein operates within cell wall biogenesis; peptidoglycan biosynthesis. Cell wall formation. The sequence is that of UDP-N-acetylmuramate--L-alanine ligase from Endomicrobium trichonymphae.